The chain runs to 492 residues: NAD(P)H-quinone oxidoreductase subunit 2 A, chloroplastic (492 aa).

13 helical membrane-spanning segments follow: residues leucine 6–leucine 26, isoleucine 39–phenylalanine 59, isoleucine 81–isoleucine 101, methionine 106–cysteine 126, leucine 131–tyrosine 151, tyrosine 165–glycine 185, proline 209–alanine 229, tryptophan 277–isoleucine 297, methionine 305–aspartate 325, tyrosine 336–leucine 356, alanine 377–phenylalanine 397, leucine 400–leucine 420, and phenylalanine 464–isoleucine 484.

The protein belongs to the complex I subunit 2 family. As to quaternary structure, NDH is composed of at least 16 different subunits, 5 of which are encoded in the nucleus.

The protein resides in the plastid. It localises to the chloroplast thylakoid membrane. It carries out the reaction a plastoquinone + NADH + (n+1) H(+)(in) = a plastoquinol + NAD(+) + n H(+)(out). The catalysed reaction is a plastoquinone + NADPH + (n+1) H(+)(in) = a plastoquinol + NADP(+) + n H(+)(out). In terms of biological role, NDH shuttles electrons from NAD(P)H:plastoquinone, via FMN and iron-sulfur (Fe-S) centers, to quinones in the photosynthetic chain and possibly in a chloroplast respiratory chain. The immediate electron acceptor for the enzyme in this species is believed to be plastoquinone. Couples the redox reaction to proton translocation, and thus conserves the redox energy in a proton gradient. The protein is NAD(P)H-quinone oxidoreductase subunit 2 A, chloroplastic of Phaseolus vulgaris (Kidney bean).